The following is a 150-amino-acid chain: Putative STAG3-like protein 4 (150 aa).

It belongs to the SCC3 family.

The chain is Putative STAG3-like protein 4 (STAG3L4) from Homo sapiens (Human).